A 103-amino-acid polypeptide reads, in one-letter code: Large ribosomal subunit protein bL21 (103 aa).

Belongs to the bacterial ribosomal protein bL21 family. In terms of assembly, part of the 50S ribosomal subunit. Contacts protein L20.

Its function is as follows. This protein binds to 23S rRNA in the presence of protein L20. The polypeptide is Large ribosomal subunit protein bL21 (Polynucleobacter necessarius subsp. necessarius (strain STIR1)).